Reading from the N-terminus, the 235-residue chain is Ion-translocating oxidoreductase complex subunit E (235 aa).

5 helical membrane-spanning segments follow: residues 63–83 (LGLG…ISLF), 93–113 (IPIY…LMNA), 117–137 (TLYQ…IIIG), 152–172 (IWDG…LGAL), and 206–226 (SFLL…LLAI).

This sequence belongs to the NqrDE/RnfAE family. The complex is composed of six subunits: RnfA, RnfB, RnfC, RnfD, RnfE and RnfG.

Its subcellular location is the cell inner membrane. Functionally, part of a membrane-bound complex that couples electron transfer with translocation of ions across the membrane. This chain is Ion-translocating oxidoreductase complex subunit E, found in Haemophilus influenzae (strain ATCC 51907 / DSM 11121 / KW20 / Rd).